We begin with the raw amino-acid sequence, 700 residues long: Polyribonucleotide nucleotidyltransferase (700 aa).

The Mg(2+) site is built by aspartate 491 and aspartate 497. Residues 558-617 form the KH domain; the sequence is PNYAVIEINPDKIRDVIGKGGATIRQLTEETGAVIDIDDAGTIRIFGENKAATKAAIAKI. The S1 motif domain occupies 627–695; sequence GKTYEGTVAR…NRGRIKLTMK (69 aa).

The protein belongs to the polyribonucleotide nucleotidyltransferase family. As to quaternary structure, component of the RNA degradosome, which is a multiprotein complex involved in RNA processing and mRNA degradation. Requires Mg(2+) as cofactor.

Its subcellular location is the cytoplasm. It catalyses the reaction RNA(n+1) + phosphate = RNA(n) + a ribonucleoside 5'-diphosphate. Involved in mRNA degradation. Catalyzes the phosphorolysis of single-stranded polyribonucleotides processively in the 3'- to 5'-direction. This chain is Polyribonucleotide nucleotidyltransferase, found in Psychrobacter cryohalolentis (strain ATCC BAA-1226 / DSM 17306 / VKM B-2378 / K5).